Reading from the N-terminus, the 454-residue chain is UDP-N-acetylmuramoylalanine--D-glutamate ligase (454 aa).

Residue 118–124 (GTNGKTT) coordinates ATP.

This sequence belongs to the MurCDEF family.

Its subcellular location is the cytoplasm. It catalyses the reaction UDP-N-acetyl-alpha-D-muramoyl-L-alanine + D-glutamate + ATP = UDP-N-acetyl-alpha-D-muramoyl-L-alanyl-D-glutamate + ADP + phosphate + H(+). It functions in the pathway cell wall biogenesis; peptidoglycan biosynthesis. Cell wall formation. Catalyzes the addition of glutamate to the nucleotide precursor UDP-N-acetylmuramoyl-L-alanine (UMA). In Thermosynechococcus vestitus (strain NIES-2133 / IAM M-273 / BP-1), this protein is UDP-N-acetylmuramoylalanine--D-glutamate ligase.